Here is a 763-residue protein sequence, read N- to C-terminus: Phosphoglycerol transferase I (763 aa).

4 helical membrane passes run 1 to 21 (MSEL…AWKA), 26 to 46 (WWFA…ITLF), 77 to 97 (ILPG…LGWI), and 108 to 128 (FGYS…SPAF).

It belongs to the OpgB family.

The protein localises to the cell inner membrane. The catalysed reaction is a phosphatidylglycerol + a membrane-derived-oligosaccharide D-glucose = a 1,2-diacyl-sn-glycerol + a membrane-derived-oligosaccharide 6-(glycerophospho)-D-glucose.. It functions in the pathway glycan metabolism; osmoregulated periplasmic glucan (OPG) biosynthesis. Its function is as follows. Transfers a phosphoglycerol residue from phosphatidylglycerol to the membrane-bound nascent glucan backbones. The polypeptide is Phosphoglycerol transferase I (Escherichia coli (strain UTI89 / UPEC)).